Consider the following 138-residue polypeptide: Flagellar basal body rod protein FlgB (138 aa).

The protein belongs to the flagella basal body rod proteins family. The basal body constitutes a major portion of the flagellar organelle and consists of a number of rings mounted on a central rod. In Gram-negative bacteria, at least four rings, L, P, S and M are present, whereas Gram-positive bacteria lack the L and P rings. The rod consists of about 26 subunits of FlgG in the distal portion, and FlgB, FlgC and FlgF build up the proximal portion of the rod with about 6 subunits each. Rod assembly occurs by export via the flagellum-specific pathway of its constituent proteins and by their incorporation into the rod structure in the probable order of FlgB, FlgC, FlgF and FlgG. Another protein, FliE, also assembles onto the stable rod structure.

It is found in the bacterial flagellum basal body. Functionally, structural component of flagellum, the bacterial motility apparatus. Part of the rod structure of flagellar basal body. In Escherichia coli (strain K12), this protein is Flagellar basal body rod protein FlgB (flgB).